Here is a 201-residue protein sequence, read N- to C-terminus: Urease accessory protein UreG (201 aa).

12-19 is a GTP binding site; it reads GPVGSGKT.

The protein belongs to the SIMIBI class G3E GTPase family. UreG subfamily. As to quaternary structure, homodimer. UreD, UreF and UreG form a complex that acts as a GTP-hydrolysis-dependent molecular chaperone, activating the urease apoprotein by helping to assemble the nickel containing metallocenter of UreC. The UreE protein probably delivers the nickel.

The protein localises to the cytoplasm. Facilitates the functional incorporation of the urease nickel metallocenter. This process requires GTP hydrolysis, probably effectuated by UreG. This is Urease accessory protein UreG from Dechloromonas aromatica (strain RCB).